Here is a 242-residue protein sequence, read N- to C-terminus: Biosynthetic peptidoglycan transglycosylase (242 aa).

Residues 19–39 (ILAALAVFWGGGIALFSVVPV) traverse the membrane as a helical segment.

The protein belongs to the glycosyltransferase 51 family.

The protein resides in the cell inner membrane. It carries out the reaction [GlcNAc-(1-&gt;4)-Mur2Ac(oyl-L-Ala-gamma-D-Glu-L-Lys-D-Ala-D-Ala)](n)-di-trans,octa-cis-undecaprenyl diphosphate + beta-D-GlcNAc-(1-&gt;4)-Mur2Ac(oyl-L-Ala-gamma-D-Glu-L-Lys-D-Ala-D-Ala)-di-trans,octa-cis-undecaprenyl diphosphate = [GlcNAc-(1-&gt;4)-Mur2Ac(oyl-L-Ala-gamma-D-Glu-L-Lys-D-Ala-D-Ala)](n+1)-di-trans,octa-cis-undecaprenyl diphosphate + di-trans,octa-cis-undecaprenyl diphosphate + H(+). It functions in the pathway cell wall biogenesis; peptidoglycan biosynthesis. Its function is as follows. Peptidoglycan polymerase that catalyzes glycan chain elongation from lipid-linked precursors. In Salmonella schwarzengrund (strain CVM19633), this protein is Biosynthetic peptidoglycan transglycosylase.